We begin with the raw amino-acid sequence, 261 residues long: Phosphate import ATP-binding protein PstB (261 aa).

Residues L15–I256 form the ABC transporter domain. G47–S54 provides a ligand contact to ATP.

This sequence belongs to the ABC transporter superfamily. Phosphate importer (TC 3.A.1.7) family. The complex is composed of two ATP-binding proteins (PstB), two transmembrane proteins (PstC and PstA) and a solute-binding protein (PstS).

Its subcellular location is the cell inner membrane. The enzyme catalyses phosphate(out) + ATP + H2O = ADP + 2 phosphate(in) + H(+). Part of the ABC transporter complex PstSACB involved in phosphate import. Responsible for energy coupling to the transport system. This Burkholderia sp protein is Phosphate import ATP-binding protein PstB.